The primary structure comprises 756 residues: MRRDPAPGFSMLLFGVSLACYSPSLKSVQDQAYKAPVVVEGKVQGLAPAGGSSSNSTREPPASGRVALVKVLDKWPLRSGGLQREQVISVGSCAPLERNQRYIFFLEPTEQPLVFKTAFAPVDPNGKNIKKEVGKILCTDCATRPKLKKMKSQTGEVGEKQSLKCEAAAGNPQPSYRWFKDGKELNRSRDIRIKYGNGRKNSRLQFNKVRVEDAGEYVCEAENILGKDTVRGRLHVNSVSTTLSSWSGHARKCNETAKSYCVNGGVCYYIEGINQLSCKCPVGYTGDRCQQFAMVNFSKHLGFELKEAEELYQKRVLTITGICVALLVVGIVCVVAYCKTKKQRRQMHHHLRQNMCPAHQNRSLANGPSHPRLDPEEIQMADYISKNVPATDHVIRREAETTFSGSHSCSPSHHCSTATPTSSHRHESHTWSLERSESLTSDSQSGIMLSSVGTSKCNSPACVEARARRAAAYSQEERRRAAMPPYHDSIDSLRDSPHSERYVSALTTPARLSPVDFHYSLATQVPTFEITSPNSAHAVSLPPAAPISYRLAEQQPLLRHPAPPGPGPGSGPGADMQRSYDSYYYPAAGPGPRRSACALGGSLGSLPASPFRIPEDDEYETTQECAPPPPPRPRTRGASRRTSAGPRRWRRSRLNGLAAQRARAARDSLSLSSGSGCGSASASDDDADDADGALAAESTPFLGLRAAHDALRSDSPPLCPAADSRTYYSLDSHSTRASSRHSRGPPTRAKQDSGPL.

Positions 1 to 19 (MRRDPAPGFSMLLFGVSLA) are excised as a propeptide. Residues 20 to 315 (CYSPSLKSVQ…KEAEELYQKR (296 aa)) lie on the Extracellular side of the membrane. 3 N-linked (GlcNAc...) asparagine glycosylation sites follow: Asn-55, Asn-186, and Asn-254. An Ig-like C2-type domain is found at 145–240 (PKLKKMKSQT…RGRLHVNSVS (96 aa)). Disulfide bonds link Cys-165–Cys-219, Cys-253–Cys-267, Cys-261–Cys-278, and Cys-280–Cys-289. An EGF-like domain is found at 249-290 (HARKCNETAKSYCVNGGVCYYIEGINQLSCKCPVGYTGDRCQ). A glycan (N-linked (GlcNAc...) asparagine) is linked at Asn-296. Residues 316–336 (VLTITGICVALLVVGIVCVVA) traverse the membrane as a helical segment. At 337-756 (YCKTKKQRRQ…TRAKQDSGPL (420 aa)) the chain is on the cytoplasmic side. 4 disordered regions span residues 402 to 439 (TFSGSHSCSPSHHCSTATPTSSHRHESHTWSLERSESL), 557 to 578 (LLRHPAPPGPGPGSGPGADMQR), 608 to 694 (ASPF…DGAL), and 711 to 756 (LRSD…SGPL). The segment covering 404 to 416 (SGSHSCSPSHHCS) has biased composition (low complexity). Positions 424–437 (HRHESHTWSLERSE) are enriched in basic and acidic residues. Residues 654 to 682 (LNGLAAQRARAARDSLSLSSGSGCGSASA) show a composition bias toward low complexity.

This sequence belongs to the neuregulin family. In terms of assembly, interacts with ERBB3 and ERBB4. Proteolytic cleavage close to the plasma membrane on the external face leads to the release of the soluble growth factor form. In terms of processing, extensive glycosylation precedes the proteolytic cleavage. Highest expression in the brain, with lower levels in the lung. In the cerebellum, found in granule and Purkinje cells.

The protein localises to the cell membrane. It localises to the secreted. Direct ligand for ERBB3 and ERBB4 tyrosine kinase receptors. Concomitantly recruits ERBB1 and ERBB2 coreceptors, resulting in ligand-stimulated tyrosine phosphorylation and activation of the ERBB receptors. May also promote the heterodimerization with the EGF receptor. The sequence is that of Pro-neuregulin-2, membrane-bound isoform (Nrg2) from Mus musculus (Mouse).